Consider the following 842-residue polypeptide: Axin-1 (842 aa).

Positions 1 to 75 are disordered; the sequence is MSVKGKGFPL…LDLGYEPEGS (75 aa). Residues 34-46 show a composition bias toward polar residues; sequence TTDQRPFSHTYYS. The 124-residue stretch at 88 to 211 folds into the RGS domain; sequence SLHSLLDDQD…LKSDIYLEYT (124 aa). 9 disordered regions span residues 218-242, 277-297, 316-344, 414-451, 482-532, 543-562, 615-637, 656-675, and 729-754; these read PKNY…PTLN, SHCA…PGTW, TSAN…DGIP, KRVR…NSRY, KTPG…AKVD, YHHV…DGES, KKAD…EDSE, HKKS…TELA, and RLEE…KNVS. Polar residues predominate over residues 316 to 339; sequence TSANDSEQQSMSSDADTMSLTDSS. Residues 348 to 433 are interaction with GSK3B; the sequence is LRKHYRREMQ…DGDVSSGPSV (86 aa). An interaction with beta-catenin region spans residues 434-508; it reads ISHKLPSGPP…RSPDGHLSKT (75 aa). Residues 543–552 show a composition bias toward basic residues; sequence YHHVHHHGGV. Over residues 615–626 the composition is skewed to basic and acidic residues; the sequence is KKADLGKSESAS. In terms of domain architecture, DIX spans 760–842; sequence CDNIVVAYYF…KIIGQVEKID (83 aa).

As to quaternary structure, homodimer. Interacts with hwa; leading to promote the tankyrase-mediated degradation of axin1. Post-translationally, ADP-ribosylated by tankyrase tnks and tnks2. Poly-ADP-ribosylated protein is recognized by rnf146, followed by ubiquitination at 'Lys-48' and subsequent activation of the Wnt signaling pathway. Ubiquitinated by rnf146 when poly-ADP-ribosylated, leading to its degradation and subsequent activation of the Wnt signaling pathway.

The protein localises to the cytoplasm. The protein resides in the nucleus. It localises to the membrane. It is found in the cell membrane. In terms of biological role, component of the beta-catenin destruction complex required for regulating ctnnb1 levels through phosphorylation and ubiquitination, and modulating Wnt-signaling. Controls dorsoventral patterning via two opposing effects; down-regulates ctnnb1 to inhibit the Wnt signaling pathway and ventralize embryos, but also dorsalizes embryos by activating a Wnt-independent JNK signaling pathway. In Xenopus laevis (African clawed frog), this protein is Axin-1 (axin1).